Consider the following 269-residue polypeptide: RBPJ-interacting and tubulin-associated protein 1 (269 aa).

The Nuclear export signal signature appears at 5 to 17 (VELAVSGIQTLPL). Disordered regions lie at residues 37–101 (SLFG…NKYR) and 141–269 (FWTP…PPWK). The span at 62–77 (RTSGVGTGTSRASGAN) shows a compositional bias: polar residues. Low complexity predominate over residues 79 to 93 (SCETTSSSGSTPTLT). Residues 92-108 (LTPRKKNKYRLISHTPS) carry the Nuclear localization signal motif. The interaction with RBPJ/RBPSUH stretch occupies residues 128–156 (WMAKGDAAKLHSLFWTPPATPRGSHSPRP). The interaction with tubulin stretch occupies residues 156–269 (PRETPLRAIH…ATQKPKPPWK (114 aa)).

The protein belongs to the RITA family. In terms of assembly, interacts with RBPJ/RBPSUH.

It is found in the cytoplasm. The protein resides in the nucleus. It localises to the cytoskeleton. The protein localises to the microtubule organizing center. Its subcellular location is the centrosome. In terms of biological role, tubulin-binding protein that acts as a negative regulator of Notch signaling pathway. Shuttles between the cytoplasm and the nucleus and mediates the nuclear export of RBPJ/RBPSUH, thereby preventing the interaction between RBPJ/RBPSUH and NICD product of Notch proteins (Notch intracellular domain), leading to down-regulate Notch-mediated transcription. May play a role in neurogenesis. The sequence is that of RBPJ-interacting and tubulin-associated protein 1 (RITA1) from Ailuropoda melanoleuca (Giant panda).